The sequence spans 364 residues: Fructose-bisphosphate aldolase A (364 aa).

At Y5 the chain carries Phosphotyrosine. T9 is modified (phosphothreonine). Residues S36 and S39 each carry the phosphoserine modification. K42 carries the N6-acetyllysine; alternate modification. Residue K42 forms a Glycyl lysine isopeptide (Lys-Gly) (interchain with G-Cter in SUMO1); alternate linkage. A Glycyl lysine isopeptide (Lys-Gly) (interchain with G-Cter in SUMO2); alternate cross-link involves residue K42. Position 43 (R43) interacts with beta-D-fructose 1,6-bisphosphate. S46 bears the Phosphoserine mark. K99 bears the N6-(2-hydroxyisobutyryl)lysine mark. N6-acetyllysine is present on K108. An N6-acetyllysine; alternate modification is found at K111. N6-malonyllysine; alternate is present on K111. S132 is subject to Phosphoserine. K147 carries the N6-(2-hydroxyisobutyryl)lysine modification. E188 serves as the catalytic Proton acceptor. The Schiff-base intermediate with dihydroxyacetone-P role is filled by K230. The residue at position 272 (S272) is a Phosphoserine. Beta-D-fructose 1,6-bisphosphate is bound by residues 272 to 274 (SGG), S301, and R304. Position 312 is an N6-malonyllysine (K312). The residue at position 330 (K330) is an N6-acetyllysine.

This sequence belongs to the class I fructose-bisphosphate aldolase family. As to quaternary structure, homotetramer. Interacts with SNX9 and WAS. Interacts with FBP2; the interaction blocks FBP2 inhibition by physiological concentrations of AMP and reduces inhibition by Ca(2+).

The protein resides in the cytoplasm. It is found in the myofibril. The protein localises to the sarcomere. Its subcellular location is the i band. It localises to the m line. It catalyses the reaction beta-D-fructose 1,6-bisphosphate = D-glyceraldehyde 3-phosphate + dihydroxyacetone phosphate. The protein operates within carbohydrate degradation; glycolysis; D-glyceraldehyde 3-phosphate and glycerone phosphate from D-glucose: step 4/4. Its function is as follows. Catalyzes the reversible conversion of beta-D-fructose 1,6-bisphosphate (FBP) into two triose phosphate and plays a key role in glycolysis and gluconeogenesis. In addition, may also function as scaffolding protein. The chain is Fructose-bisphosphate aldolase A from Homo sapiens (Human).